Here is a 410-residue protein sequence, read N- to C-terminus: UPF0761 membrane protein Csal_1895 (410 aa).

6 helical membrane passes run 43 to 63 (LFAV…IPSF), 99 to 119 (SLTL…MVTV), 139 to 159 (FLLY…GFLL), 180 to 200 (VAFL…FIYM), 212 to 232 (AVAG…AFSL), and 247 to 267 (FAAV…VLVG).

This sequence belongs to the UPF0761 family.

It is found in the cell inner membrane. In Chromohalobacter salexigens (strain ATCC BAA-138 / DSM 3043 / CIP 106854 / NCIMB 13768 / 1H11), this protein is UPF0761 membrane protein Csal_1895.